Consider the following 339-residue polypeptide: Anthranilate phosphoribosyltransferase (339 aa).

5-phospho-alpha-D-ribose 1-diphosphate is bound by residues Gly79, 82 to 83, Thr87, 89 to 92, 107 to 115, and Ser119; these read GD, NVST, and KHGNRSVSS. Anthranilate is bound at residue Gly79. Position 91 (Ser91) interacts with Mg(2+). Asn110 lines the anthranilate pocket. Arg165 contributes to the anthranilate binding site. The Mg(2+) site is built by Asp224 and Glu225.

This sequence belongs to the anthranilate phosphoribosyltransferase family. Homodimer. Requires Mg(2+) as cofactor.

It carries out the reaction N-(5-phospho-beta-D-ribosyl)anthranilate + diphosphate = 5-phospho-alpha-D-ribose 1-diphosphate + anthranilate. Its pathway is amino-acid biosynthesis; L-tryptophan biosynthesis; L-tryptophan from chorismate: step 2/5. In terms of biological role, catalyzes the transfer of the phosphoribosyl group of 5-phosphorylribose-1-pyrophosphate (PRPP) to anthranilate to yield N-(5'-phosphoribosyl)-anthranilate (PRA). This is Anthranilate phosphoribosyltransferase from Caldivirga maquilingensis (strain ATCC 700844 / DSM 13496 / JCM 10307 / IC-167).